The sequence spans 237 residues: Orotidine 5'-phosphate decarboxylase (237 aa).

Substrate contacts are provided by residues Asp-17, Lys-39, 66–75 (DLKLHDIGNT), Thr-121, Arg-182, Gln-191, Gly-211, and Arg-212. Lys-68 acts as the Proton donor in catalysis.

Belongs to the OMP decarboxylase family. Type 1 subfamily. Homodimer.

It catalyses the reaction orotidine 5'-phosphate + H(+) = UMP + CO2. It functions in the pathway pyrimidine metabolism; UMP biosynthesis via de novo pathway; UMP from orotate: step 2/2. Functionally, catalyzes the decarboxylation of orotidine 5'-monophosphate (OMP) to uridine 5'-monophosphate (UMP). This is Orotidine 5'-phosphate decarboxylase from Rhodopseudomonas palustris (strain TIE-1).